The chain runs to 35 residues: Mu-theraphotoxin-Pn3b (35 aa).

3 disulfide bridges follow: Cys2/Cys16, Cys9/Cys21, and Cys15/Cys28.

This sequence belongs to the neurotoxin 10 (Hwtx-1) family. 28 (Jztx-11) subfamily. Expressed by the venom gland.

It is found in the secreted. Functionally, gating-modifier toxin that targets voltage-gated sodium channels with a preferential activity on Nav1.7/SCN9A. On Nav1.7/SCN9A, the toxin acts by shifting the voltage-dependence of activation to more depolarized potentials, whereas it does not cause significant effect on the voltage-dependence of activation on other sodium channels. Minor effects are observed on the voltage-dependence of steady-state fast inactivation for all sodium channels tested (Nav1.1/SCN1A-Nav1.8/SCN10A). By testing the toxin on channel chimera, it has been shown to interact with the S3-S4 linkers in DII and DIV domains of Nav1.7/SCN9A. In vivo, the toxin dose-dependently reduces OD1-induced spontaneous pain behaviors. The protein is Mu-theraphotoxin-Pn3b of Pamphobeteus nigricolor (Giant blue bloom tarantula).